The following is a 245-amino-acid chain: Ribonuclease 3 (245 aa).

In terms of domain architecture, RNase III spans 18–146 (LSKFLENLSI…FVGAIYLDSG (129 aa)). Residue Glu59 coordinates Mg(2+). Residue Asp63 is part of the active site. Residues Asp132 and Glu135 each coordinate Mg(2+). The active site involves Glu135. Residues 173-242 (DYKSLLQEYV…AEVALKAMEN (70 aa)) form the DRBM domain.

This sequence belongs to the ribonuclease III family. As to quaternary structure, homodimer. Mg(2+) is required as a cofactor.

It localises to the cytoplasm. The enzyme catalyses Endonucleolytic cleavage to 5'-phosphomonoester.. Functionally, digests double-stranded RNA. Involved in the processing of primary rRNA transcript to yield the immediate precursors to the large and small rRNAs (23S and 16S). Processes some mRNAs, and tRNAs when they are encoded in the rRNA operon. Processes pre-crRNA and tracrRNA of type II CRISPR loci if present in the organism. This Borreliella burgdorferi (strain ATCC 35210 / DSM 4680 / CIP 102532 / B31) (Borrelia burgdorferi) protein is Ribonuclease 3.